The following is a 288-amino-acid chain: 4-hydroxy-tetrahydrodipicolinate synthase (288 aa).

Thr47 is a binding site for pyruvate. The active-site Proton donor/acceptor is the Tyr136. Lys164 acts as the Schiff-base intermediate with substrate in catalysis. Ile204 contributes to the pyruvate binding site.

The protein belongs to the DapA family. As to quaternary structure, homotetramer; dimer of dimers.

The protein resides in the cytoplasm. It carries out the reaction L-aspartate 4-semialdehyde + pyruvate = (2S,4S)-4-hydroxy-2,3,4,5-tetrahydrodipicolinate + H2O + H(+). Its pathway is amino-acid biosynthesis; L-lysine biosynthesis via DAP pathway; (S)-tetrahydrodipicolinate from L-aspartate: step 3/4. In terms of biological role, catalyzes the condensation of (S)-aspartate-beta-semialdehyde [(S)-ASA] and pyruvate to 4-hydroxy-tetrahydrodipicolinate (HTPA). The sequence is that of 4-hydroxy-tetrahydrodipicolinate synthase from Leuconostoc mesenteroides subsp. mesenteroides (strain ATCC 8293 / DSM 20343 / BCRC 11652 / CCM 1803 / JCM 6124 / NCDO 523 / NBRC 100496 / NCIMB 8023 / NCTC 12954 / NRRL B-1118 / 37Y).